The sequence spans 127 residues: uncharacterized protein (127 aa).

Thr30 bears the Phosphothreonine mark. A disordered region spans residues 51-75; that stretch reads APTYEQVLYPPASQKKTSNSTSEES. At Ser63 the chain carries Phosphoserine.

This is an uncharacterized protein from Mus musculus (Mouse).